A 348-amino-acid chain; its full sequence is Phospho-2-dehydro-3-deoxyheptonate aldolase, Trp-sensitive (348 aa).

This sequence belongs to the class-I DAHP synthase family.

The enzyme catalyses D-erythrose 4-phosphate + phosphoenolpyruvate + H2O = 7-phospho-2-dehydro-3-deoxy-D-arabino-heptonate + phosphate. Its pathway is metabolic intermediate biosynthesis; chorismate biosynthesis; chorismate from D-erythrose 4-phosphate and phosphoenolpyruvate: step 1/7. Functionally, stereospecific condensation of phosphoenolpyruvate (PEP) and D-erythrose-4-phosphate (E4P) giving rise to 3-deoxy-D-arabino-heptulosonate-7-phosphate (DAHP). This Buchnera aphidicola subsp. Schizaphis graminum (strain Sg) protein is Phospho-2-dehydro-3-deoxyheptonate aldolase, Trp-sensitive (aroH).